A 125-amino-acid chain; its full sequence is Large ribosomal subunit protein eL31 (125 aa).

The residue at position 1 (M1) is an N-acetylmethionine. A Phosphoserine modification is found at S15. N6-succinyllysine occurs at positions 55 and 70. K75 is subject to N6-acetyllysine; alternate. Residue K75 is modified to N6-succinyllysine; alternate. Position 98 is a phosphoserine (S98).

The protein belongs to the eukaryotic ribosomal protein eL31 family. Component of the large ribosomal subunit.

The protein resides in the cytoplasm. In terms of biological role, component of the large ribosomal subunit. The ribosome is a large ribonucleoprotein complex responsible for the synthesis of proteins in the cell. This Pongo abelii (Sumatran orangutan) protein is Large ribosomal subunit protein eL31 (RPL31).